The primary structure comprises 445 residues: Flagellum-associated coiled-coil domain-containing protein 1 (445 aa).

Residues 26-47 (PQLPRKNSTGSSKLTPLVPAPK) are disordered. The span at 30 to 39 (RKNSTGSSKL) shows a compositional bias: polar residues. 2 coiled-coil regions span residues 122–226 (SRTN…TYQD) and 283–315 (AVFENFIQEKEELLKQHQSDTLQLEELRKTKEV). N6-acetyllysine is present on K376. Residues 387 to 414 (EKYKHTIQILTEENIHLKQKIISKNEEI) are a coiled coil.

Its subcellular location is the cytoplasm. The protein localises to the cytoplasmic granule. It is found in the cell projection. The protein resides in the cilium. It localises to the flagellum. The polypeptide is Flagellum-associated coiled-coil domain-containing protein 1 (Homo sapiens (Human)).